The chain runs to 68 residues: uncharacterized protein (68 aa).

This is an uncharacterized protein from Dictyostelium discoideum (Social amoeba).